The sequence spans 235 residues: Aspartate/glutamate leucyltransferase (235 aa).

Belongs to the R-transferase family. Bpt subfamily.

The protein localises to the cytoplasm. The catalysed reaction is N-terminal L-glutamyl-[protein] + L-leucyl-tRNA(Leu) = N-terminal L-leucyl-L-glutamyl-[protein] + tRNA(Leu) + H(+). It catalyses the reaction N-terminal L-aspartyl-[protein] + L-leucyl-tRNA(Leu) = N-terminal L-leucyl-L-aspartyl-[protein] + tRNA(Leu) + H(+). In terms of biological role, functions in the N-end rule pathway of protein degradation where it conjugates Leu from its aminoacyl-tRNA to the N-termini of proteins containing an N-terminal aspartate or glutamate. The polypeptide is Aspartate/glutamate leucyltransferase (Pseudomonas paraeruginosa (strain DSM 24068 / PA7) (Pseudomonas aeruginosa (strain PA7))).